The sequence spans 219 residues: Eukaryotic translation initiation factor 3 subunit K (219 aa).

Residues 43 to 205 enclose the PCI domain; sequence YDLEANLAVL…SVKPKNIVEK (163 aa).

This sequence belongs to the eIF-3 subunit K family. Component of the eukaryotic translation initiation factor 3 (eIF-3) complex, which is composed of 13 subunits: eif3a, eif3b, eif3c, eif3d, eif3e, eif3f, eif3g, eif3h, eif3i, eif3j, eif3k, eif3l and eif3m.

The protein localises to the nucleus. It localises to the cytoplasm. Functionally, component of the eukaryotic translation initiation factor 3 (eIF-3) complex, which is involved in protein synthesis of a specialized repertoire of mRNAs and, together with other initiation factors, stimulates binding of mRNA and methionyl-tRNAi to the 40S ribosome. The eIF-3 complex specifically targets and initiates translation of a subset of mRNAs involved in cell proliferation. This Danio rerio (Zebrafish) protein is Eukaryotic translation initiation factor 3 subunit K (eif3k).